A 400-amino-acid chain; its full sequence is 1-deoxy-D-xylulose 5-phosphate reductoisomerase (400 aa).

NADPH is bound by residues threonine 10, glycine 11, serine 12, isoleucine 13, glycine 36, asparagine 38, and asparagine 124. Lysine 125 serves as a coordination point for 1-deoxy-D-xylulose 5-phosphate. Glutamate 126 is a binding site for NADPH. Residue aspartate 150 participates in Mn(2+) binding. 4 residues coordinate 1-deoxy-D-xylulose 5-phosphate: serine 151, glutamate 152, serine 186, and histidine 209. Glutamate 152 contacts Mn(2+). Glycine 215 lines the NADPH pocket. Residues serine 222, asparagine 227, lysine 228, and glutamate 231 each contribute to the 1-deoxy-D-xylulose 5-phosphate site. Glutamate 231 is a binding site for Mn(2+).

Belongs to the DXR family. Mg(2+) is required as a cofactor. It depends on Mn(2+) as a cofactor.

The catalysed reaction is 2-C-methyl-D-erythritol 4-phosphate + NADP(+) = 1-deoxy-D-xylulose 5-phosphate + NADPH + H(+). The protein operates within isoprenoid biosynthesis; isopentenyl diphosphate biosynthesis via DXP pathway; isopentenyl diphosphate from 1-deoxy-D-xylulose 5-phosphate: step 1/6. Its function is as follows. Catalyzes the NADPH-dependent rearrangement and reduction of 1-deoxy-D-xylulose-5-phosphate (DXP) to 2-C-methyl-D-erythritol 4-phosphate (MEP). The chain is 1-deoxy-D-xylulose 5-phosphate reductoisomerase from Aliivibrio salmonicida (strain LFI1238) (Vibrio salmonicida (strain LFI1238)).